We begin with the raw amino-acid sequence, 97 residues long: MICOS complex subunit MIC12 (97 aa).

Residues 7–24 (LTSITAVSSTLAASYYFY) traverse the membrane as a helical segment.

The protein belongs to the MICOS complex subunit Mic12 family. Component of the mitochondrial contact site and cristae organizing system (MICOS) complex.

It is found in the mitochondrion inner membrane. Component of the MICOS complex, a large protein complex of the mitochondrial inner membrane that plays crucial roles in the maintenance of crista junctions, inner membrane architecture, and formation of contact sites to the outer membrane. In Zygosaccharomyces rouxii (strain ATCC 2623 / CBS 732 / NBRC 1130 / NCYC 568 / NRRL Y-229), this protein is MICOS complex subunit MIC12 (AIM5).